Consider the following 603-residue polypeptide: Laccase 1 (603 aa).

An N-terminal signal peptide occupies residues 1-20 (MSRFARLLLIVALFFTNAWA). 2 consecutive Plastocyanin-like domains span residues 66-108 (QRPI…IHIR) and 159-349 (LVVS…MRIP). Positions 90 and 92 each coordinate Cu cation. N-linked (GlcNAc...) asparagine glycosylation is found at Asn-246, Asn-269, Asn-434, and Asn-474. One can recognise a Plastocyanin-like 3 domain in the interval 460–588 (TRDTENDGLV…GGMGIAILDG (129 aa)). 3 residues coordinate Cu cation: His-496, His-499, and His-501. N-linked (GlcNAc...) asparagine glycosylation occurs at Asn-516. The Cu cation site is built by His-570, Cys-571, His-572, and His-576.

The protein belongs to the multicopper oxidase family. It depends on Cu cation as a cofactor.

The protein localises to the cell surface. The protein operates within pigment biosynthesis. Functionally, laccase; part of the Pks1 gene cluster that mediates the biosynthesis of an anthraquinone derivative pigment that contributes to conidial pigmentation that provides protection from UV radiation, heat and cold stress. The polyketide synthase Pks1 produces 1-acetyl-2,4,6,8-tetrahydroxy-9,10-anthraquinone though condensation of acetyl-CoA with malonyl-CoA. The dehydratase EthD and the laccase Mlac1 further convert the anthraquinone derivative into the final conidial pigment. This chain is Laccase 1, found in Metarhizium anisopliae (Entomophthora anisopliae).